The following is a 292-amino-acid chain: Peroxisomal 2,4-dienoyl-CoA reductase [(3E)-enoyl-CoA-producing] (292 aa).

A2 bears the N-acetylalanine mark. Residues 35 to 40 (GGGSGI), 60 to 64 (RSLPR), and D86 contribute to the NADP(+) site. R60 contributes to the substrate binding site. Substrate contacts are provided by residues R88, F118, and 126-128 (SFN). An N6-acetyllysine modification is found at K151. NADP(+) is bound by residues K182 and 208–214 (PGPISGT). Residue R219 participates in substrate binding. Phosphoserine is present on S287. The Microbody targeting signal signature appears at 290 to 292 (AKL). K291 carries the N6-acetyllysine modification.

The protein belongs to the short-chain dehydrogenases/reductases (SDR) family. 2,4-dienoyl-CoA reductase subfamily. As to quaternary structure, monomer, dimer and oligomer.

The protein resides in the peroxisome. The enzyme catalyses a (2E,4Z)-dienoyl-CoA + NADPH + H(+) = a 4,5-saturated-(3E)-enoyl-CoA + NADP(+). It carries out the reaction a (2E,4E)-dienoyl-CoA + NADPH + H(+) = a 4,5-saturated-(3E)-enoyl-CoA + NADP(+). It catalyses the reaction (2E,4E)-hexadienoyl-CoA + NADPH + H(+) = (3E)-hexenoyl-CoA + NADP(+). The catalysed reaction is (2E,4E)-decadienoyl-CoA + NADPH + H(+) = (3E)-decenoyl-CoA + NADP(+). The enzyme catalyses (2E,4Z,7Z,10Z,13Z,16Z,19Z)-docosaheptaenoyl-CoA + NADPH + H(+) = (3E,7Z,10Z,13Z,16Z,19Z)-docosahexaenoyl-CoA + NADP(+). Functionally, auxiliary enzyme of beta-oxidation. Participates in the degradation of unsaturated fatty enoyl-CoA esters having double bonds in both even- and odd-numbered positions in peroxisome. Catalyzes the NADP-dependent reduction of 2,4-dienoyl-CoA to yield trans-3-enoyl-CoA. Has activity towards short and medium chain 2,4-dienoyl-CoAs, but also towards 2,4,7,10,13,16,19-docosaheptaenoyl-CoA, suggesting that it does not constitute a rate limiting step in the peroxisomal degradation of docosahexaenoic acid. The sequence is that of Peroxisomal 2,4-dienoyl-CoA reductase [(3E)-enoyl-CoA-producing] (DECR2) from Pongo abelii (Sumatran orangutan).